A 202-amino-acid polypeptide reads, in one-letter code: Small ribosomal subunit protein uS4 (202 aa).

Residues 23–42 (RKAARRSYPPGQHGQARRKR) form a disordered region. Residues 90-154 (MRLDNLVFRL…SRKLVTANLE (65 aa)) form the S4 RNA-binding domain.

It belongs to the universal ribosomal protein uS4 family. Part of the 30S ribosomal subunit. Contacts protein S5. The interaction surface between S4 and S5 is involved in control of translational fidelity.

Functionally, one of the primary rRNA binding proteins, it binds directly to 16S rRNA where it nucleates assembly of the body of the 30S subunit. Its function is as follows. With S5 and S12 plays an important role in translational accuracy. The polypeptide is Small ribosomal subunit protein uS4 (Synechococcus elongatus (strain ATCC 33912 / PCC 7942 / FACHB-805) (Anacystis nidulans R2)).